The primary structure comprises 430 residues: Histidine--tRNA ligase (430 aa).

This sequence belongs to the class-II aminoacyl-tRNA synthetase family. Homodimer.

The protein resides in the cytoplasm. The enzyme catalyses tRNA(His) + L-histidine + ATP = L-histidyl-tRNA(His) + AMP + diphosphate + H(+). The protein is Histidine--tRNA ligase of Synechococcus sp. (strain CC9902).